Reading from the N-terminus, the 294-residue chain is MYB-like transcription factor ODO1 (294 aa).

HTH myb-type domains are found at residues Lys9–Leu61 and Arg62–Leu116. 2 DNA-binding regions (H-T-H motif) span residues Trp37 to Leu61 and Trp89 to Ile112. 2 disordered regions span residues Pro128 to Gln152 and Thr171 to Cys191.

In terms of tissue distribution, restricted to the petals, with the highest expression in the limb, probably in both epidermal and mesophyll cell layers.

Its subcellular location is the nucleus. Its function is as follows. R2R3 MYB-type transcription factor controlling the production of volatile organic compounds (VOCs), including floral volatile benzenoids and phenylpropanoids (FVBP), in flowers of fragrant cultivars (e.g. cv. Mitchell and cv. V26) by regulating the shikimate pathway, via the activation of several genes (e.g. EPSPS, ADT1, PAL1, CFAT and CCoAOMT1). This scent, mostly produced in the evening and night by the petals, attracts the pollinators (e.g. the night-active hawkmoth pollinator Manduca sexta). Promotes the expression of ABCG1 in petals three hours before the onset of volatile scent emission. Anthocyanins production is not controlled by ODO1 as color and scent are produced at different stages of development. Seems to trigger a negative feed-back loop that represses the expression of EOBI. The polypeptide is MYB-like transcription factor ODO1 (Petunia hybrida (Petunia)).